We begin with the raw amino-acid sequence, 200 residues long: MATEAPVEATEIPSVAAAETVEKQPHKLERKWTFWFDNQSKPKQGVAWGSSLRKAYTFETVEEFWSLYDQIFKPSKVTVNADFHLFKAGIEPKWEDPECANGGKWTATSSRKANLETMWLETLMALVGEQFDESEDICGVVASVRRSQDKLSLWTKTATNEAAQMGIGRKWKEIIDAEKISYSFHDDSKRERSAKSRYTV.

MRNA-binding positions include 44–49, Lys-76, and 94–95; these read QGVAWG and WE. Cys-99 and Cys-138 are disulfide-bonded. Residues 145–150 and 189–192 each bind mRNA; these read RRSQDK and KRER.

Belongs to the eukaryotic initiation factor 4E family. As to quaternary structure, EIF4F is a multi-subunit complex, the composition of which varies with external and internal environmental conditions. It is composed of at least EIF4A, EIF4E and EIF4G. EIF4E is also known to interact with other partners. In higher plants two isoforms of EIF4F have been identified, named isoform EIF4F and isoform EIF(iso)4F. Isoform EIF4F has subunits p220 and p26, whereas isoform EIF(iso)4F has subunits p82 and p28. In terms of assembly, (Microbial infection) Interacts with viral genome-linked protein (VPg); this interaction is possible in susceptible hosts but impaired in resistant plants. According to the redox status, the Cys-99-Cys-138 disulfide bridge may have a role in regulating protein function by affecting its ability to bind capped mRNA. In terms of tissue distribution, mostly expressed in roots and leaves, and, to a lower extent, in stems, flowers and immature green fruits.

It is found in the cytoplasm. It localises to the nucleus. Its function is as follows. Component of the protein complex eIF4F, which is involved in the recognition of the mRNA cap, ATP-dependent unwinding of 5'-terminal secondary structure and recruitment of mRNA to the ribosome. Recognizes and binds the 7-methylguanosine-containing mRNA cap during an early step in the initiation of protein synthesis and facilitates ribosome binding by inducing the unwinding of the mRNAs secondary structures. Key component of recessive resistance to potyviruses. Functionally, (Microbial infection) Susceptibility host factor required for viral infection by recruiting viral RNAs to the host ribosomal complex via an interaction with viral genome-linked protein (VPg). This is Eukaryotic translation initiation factor isoform 4E from Solanum lycopersicum (Tomato).